The following is a 25-amino-acid chain: ATP synthase subunit alpha, mitochondrial (25 aa).

This sequence belongs to the ATPase alpha/beta chains family. As to quaternary structure, F-type ATPases have 2 components, CF(1) - the catalytic core - and CF(0) - the membrane proton channel. CF(1) has five subunits: alpha(3), beta(3), gamma(1), delta(1), epsilon(1). CF(0) has three main subunits: a, b and c.

The protein localises to the mitochondrion. Its subcellular location is the mitochondrion inner membrane. Mitochondrial membrane ATP synthase (F(1)F(0) ATP synthase or Complex V) produces ATP from ADP in the presence of a proton gradient across the membrane which is generated by electron transport complexes of the respiratory chain. F-type ATPases consist of two structural domains, F(1) - containing the extramembraneous catalytic core, and F(0) - containing the membrane proton channel, linked together by a central stalk and a peripheral stalk. During catalysis, ATP synthesis in the catalytic domain of F(1) is coupled via a rotary mechanism of the central stalk subunits to proton translocation. Subunits alpha and beta form the catalytic core in F(1). Rotation of the central stalk against the surrounding alpha(3)beta(3) subunits leads to hydrolysis of ATP in three separate catalytic sites on the beta subunits. Subunit alpha does not bear the catalytic high-affinity ATP-binding sites. The chain is ATP synthase subunit alpha, mitochondrial (ATPA) from Spinacia oleracea (Spinach).